Consider the following 211-residue polypeptide: ATP phosphoribosyltransferase (211 aa).

This sequence belongs to the ATP phosphoribosyltransferase family. Short subfamily. Heteromultimer composed of HisG and HisZ subunits.

The protein localises to the cytoplasm. It catalyses the reaction 1-(5-phospho-beta-D-ribosyl)-ATP + diphosphate = 5-phospho-alpha-D-ribose 1-diphosphate + ATP. The protein operates within amino-acid biosynthesis; L-histidine biosynthesis; L-histidine from 5-phospho-alpha-D-ribose 1-diphosphate: step 1/9. In terms of biological role, catalyzes the condensation of ATP and 5-phosphoribose 1-diphosphate to form N'-(5'-phosphoribosyl)-ATP (PR-ATP). Has a crucial role in the pathway because the rate of histidine biosynthesis seems to be controlled primarily by regulation of HisG enzymatic activity. The polypeptide is ATP phosphoribosyltransferase (Pseudomonas savastanoi pv. phaseolicola (strain 1448A / Race 6) (Pseudomonas syringae pv. phaseolicola (strain 1448A / Race 6))).